We begin with the raw amino-acid sequence, 517 residues long: Nectin-1 (517 aa).

The N-terminal stretch at 1 to 30 is a signal peptide; it reads MARMGLAGAAGRWWGLALGLTAFFLPGVHS. The 111-residue stretch at 31-141 folds into the Ig-like V-type domain; the sequence is QVVQVNDSMY…GNRESQLNLT (111 aa). The Extracellular segment spans residues 31–355; it reads QVVQVNDSMY…GRRAGPVPTA (325 aa). Residues N36, N72, and N139 are each glycosylated (N-linked (GlcNAc...) asparagine). Cysteines 51 and 124 form a disulfide. Ig-like C2-type domains lie at 149-238 and 247-334; these read WIEG…FKES and PEVT…VNIT. Disulfide bonds link C172-C226 and C269-C316. N202 carries an N-linked (GlcNAc...) (complex) asparagine glycan. The interval 282–299 is interaction with FGFR; sequence WTTLNGSLPKGVEAQNRT. 4 N-linked (GlcNAc...) asparagine glycosylation sites follow: N286, N297, N307, and N332. The chain crosses the membrane as a helical span at residues 356 to 376; it reads IIGGVAGSILLVLIVVGGIVV. Topologically, residues 377–517 are cytoplasmic; that stretch reads ALRRRRHTFK…SFISKKEWYV (141 aa). Positions 399-488 are disordered; the sequence is GYSKAGIPQH…DGYGDRTLGY (90 aa). Phosphoserine is present on residues S422, S434, and S435. Y436 bears the Phosphotyrosine mark. Residues 436–445 are compositionally biased toward acidic residues; the sequence is YEEEEEEEEG. Residues 449–466 are compositionally biased toward basic and acidic residues; the sequence is GERKVGGPHPKYDEDAKR. A Phosphoserine modification is found at S511.

This sequence belongs to the nectin family. In terms of assembly, cis- and trans-homodimer. Can form trans-heterodimers with NECTIN3 and with NECTIN4. Interaction between NECTIN1 and NECTIN3 on the pre- and postsynaptic sites, respectively, initiates the formation of puncta adherentia junctions between axons and dendrites. Interacts (via cytoplasmic domain) with AFDN (via PDZ domain); this interaction recruits NECTIN1 to cadherin-based adherens junctions and provides a connection with the actin cytoskeleton. Interacts with integrin alphaV/beta3. Interacts (via Ig-like C2-type domain 2) with FGFR1, FGFR2 and FGFR3. (Microbial infection) Interacts with herpes simplex virus 1/HHV-1, herpes simplex virus 2/HHV-2, and pseudorabies virus/PRV envelope glycoprotein D. In terms of processing, (Microbial infection) Ubiquitinated by CBL following infection by herpes simplex virus 1/HHV-1 and association with HHV-1 envelope glycoprotein D, leading to its removal from cell surface.

Its subcellular location is the cell membrane. It is found in the cell junction. The protein localises to the adherens junction. The protein resides in the presynaptic cell membrane. It localises to the secreted. In terms of biological role, cell adhesion molecule that promotes cell-cell contacts and plays important roles in the development of the nervous system. Acts by forming homophilic or heterophilic trans-dimers. Heterophilic interactions have been detected between NECTIN1 and NECTIN3 and between NECTIN1 and NECTIN4. Involved in axon guidance by promoting contacts between the commissural axons and the floor plate cells. Involved in synaptogegesis. Has some neurite outgrowth-promoting activity. Promotes formation of checkerboard-like cellular pattern of hair cells and supporting cells in the auditory epithelium via heterophilic interaction with NECTIN3: NECTIN1 is present in the membrane of hair cells and associates with NECTIN3 on supporting cells, thereby mediating heterotypic adhesion between these two cell types. Required for enamel mineralization. (Microbial infection) Acts as a receptor for herpes simplex virus 1/HHV-1, herpes simplex virus 2/HHV-2, and pseudorabies virus/PRV. Constitutes the major receptor for herpes simplex virus 1/HHV-1 entry into host cells. The chain is Nectin-1 from Homo sapiens (Human).